Here is a 165-residue protein sequence, read N- to C-terminus: Growth arrest and DNA damage-inducible protein GADD45 alpha (165 aa).

Residue Thr2 is modified to Phosphothreonine.

Belongs to the GADD45 family. In terms of assembly, interacts with MAPK14. Predominantly monomeric but also forms dimers and other oligomers as concentration increases. Interacts with GADD45GIP1. Interacts weakly with PCNA. Interacts with AURKA, likely to compete with dimerization.

Its subcellular location is the nucleus. Its function is as follows. In T-cells, functions as a regulator of p38 MAPKs by inhibiting p88 phosphorylation and activity. Might affect PCNA interaction with some CDK (cell division protein kinase) complexes; stimulates DNA excision repair in vitro and inhibits entry of cells into S phase. This chain is Growth arrest and DNA damage-inducible protein GADD45 alpha (GADD45A), found in Homo sapiens (Human).